The following is a 382-amino-acid chain: ATP phosphoribosyltransferase regulatory subunit (382 aa).

The protein belongs to the class-II aminoacyl-tRNA synthetase family. HisZ subfamily. Heteromultimer composed of HisG and HisZ subunits.

It is found in the cytoplasm. The protein operates within amino-acid biosynthesis; L-histidine biosynthesis; L-histidine from 5-phospho-alpha-D-ribose 1-diphosphate: step 1/9. Its function is as follows. Required for the first step of histidine biosynthesis. May allow the feedback regulation of ATP phosphoribosyltransferase activity by histidine. This chain is ATP phosphoribosyltransferase regulatory subunit, found in Albidiferax ferrireducens (strain ATCC BAA-621 / DSM 15236 / T118) (Rhodoferax ferrireducens).